The following is a 551-amino-acid chain: HTH-type transcriptional regulator SgrR (551 aa).

The 116-residue stretch at 1 to 116 (MPSARLQQQF…LVSHLGRSFR (116 aa)) folds into the HTH marR-type domain. The segment at residues 26–49 (LNELAALLSCSRRHMRTLLNTMQD) is a DNA-binding region (H-T-H motif). The segment at 163 to 492 (ELEADIAHHW…IDWQADAARW (330 aa)) is solute-binding.

Activates the small RNA gene sgrS under glucose-phosphate stress conditions as well as yfdZ. Represses its own transcription under both stress and non-stress conditions. Might act as a sensor of the intracellular accumulation of phosphoglucose by binding these molecules in its C-terminal solute-binding domain. The chain is HTH-type transcriptional regulator SgrR from Shigella sonnei (strain Ss046).